We begin with the raw amino-acid sequence, 225 residues long: Reticulon-like protein B9 (225 aa).

A Reticulon domain is found at 39–224; it reads VADILLWREP…PRGTVKNKKF (186 aa). 3 helical membrane passes run 50–70, 72–92, and 152–172; these read IAAT…VVEY, FITL…IWST, and YIVS…IGFV.

The protein localises to the endoplasmic reticulum membrane. The protein is Reticulon-like protein B9 (RTNLB9) of Arabidopsis thaliana (Mouse-ear cress).